The sequence spans 88 residues: MSETNERNNRHVYQGRVVSDKMDKTITVVVDTYKNHPVYKKRIKYSKKYYAHDENNEAKIGDTVRIMETRPLSHAKRYRLTKIVKKSI.

The protein belongs to the universal ribosomal protein uS17 family. In terms of assembly, part of the 30S ribosomal subunit.

In terms of biological role, one of the primary rRNA binding proteins, it binds specifically to the 5'-end of 16S ribosomal RNA. The chain is Small ribosomal subunit protein uS17 from Lactobacillus gasseri (strain ATCC 33323 / DSM 20243 / BCRC 14619 / CIP 102991 / JCM 1131 / KCTC 3163 / NCIMB 11718 / NCTC 13722 / AM63).